The primary structure comprises 241 residues: uncharacterized protein (241 aa).

The 133-residue stretch at 84 to 216 (TVVSLVVCDL…APGPVVAGRD (133 aa)) folds into the GGDEF domain. The segment at 215–241 (RDGEVVRLADSPPKSAHDRRRLRGNRP) is disordered. Basic residues predominate over residues 231-241 (HDRRRLRGNRP).

This is an uncharacterized protein from Streptomyces griseus.